The primary structure comprises 636 residues: Phosphomethylpyrimidine synthase (636 aa).

Residues 48–70 form a disordered region; sequence DDTPTDFGGEKNPPVRVYDTSGP. Substrate contacts are provided by residues asparagine 231, methionine 260, tyrosine 289, histidine 325, 345-347, 386-389, and glutamate 425; these read SRG and DGLR. Residue histidine 429 participates in Zn(2+) binding. Tyrosine 452 is a binding site for substrate. Residue histidine 493 participates in Zn(2+) binding. [4Fe-4S] cluster is bound by residues cysteine 573, cysteine 576, and cysteine 581.

This sequence belongs to the ThiC family. As to quaternary structure, homodimer. [4Fe-4S] cluster serves as cofactor.

It catalyses the reaction 5-amino-1-(5-phospho-beta-D-ribosyl)imidazole + S-adenosyl-L-methionine = 4-amino-2-methyl-5-(phosphooxymethyl)pyrimidine + CO + 5'-deoxyadenosine + formate + L-methionine + 3 H(+). It participates in cofactor biosynthesis; thiamine diphosphate biosynthesis. Its function is as follows. Catalyzes the synthesis of the hydroxymethylpyrimidine phosphate (HMP-P) moiety of thiamine from aminoimidazole ribotide (AIR) in a radical S-adenosyl-L-methionine (SAM)-dependent reaction. The chain is Phosphomethylpyrimidine synthase from Cellvibrio japonicus (strain Ueda107) (Pseudomonas fluorescens subsp. cellulosa).